The sequence spans 211 residues: Arginine exporter protein ArgO (211 aa).

Helical transmembrane passes span 1-21, 37-57, 68-88, 111-131, 147-167, and 179-199; these read MFTY…PLGP, LMIA…GIFG, LLAL…FGAL, IIIT…DTFV, WFAL…ALLA, and AQRI…FQLA.

Belongs to the LysE/ArgO transporter (TC 2.A.75) family.

The protein localises to the cell inner membrane. The enzyme catalyses L-arginine(in) = L-arginine(out). Functionally, involved in the export of arginine. Important to control the intracellular level of arginine and the correct balance between arginine and lysine. This Klebsiella pneumoniae subsp. pneumoniae (strain ATCC 700721 / MGH 78578) protein is Arginine exporter protein ArgO.